Here is a 147-residue protein sequence, read N- to C-terminus: MLDIMQIQEILPHRYPLLLVDRITDMEVKKSIKGYKNISISEPAFQGHFPGHPIYPGVLILEGMAQCGGVLALKSSDLTDEEMKEKVIYFMSIDNAKFRNPVRPGDRLDYELTAVKMKSTLMVLEGKAYVDGKLTAEAEFKAMIVDK.

H48 is a catalytic residue.

The protein belongs to the thioester dehydratase family. FabZ subfamily.

The protein localises to the cytoplasm. It carries out the reaction a (3R)-hydroxyacyl-[ACP] = a (2E)-enoyl-[ACP] + H2O. Its function is as follows. Involved in unsaturated fatty acids biosynthesis. Catalyzes the dehydration of short chain beta-hydroxyacyl-ACPs and long chain saturated and unsaturated beta-hydroxyacyl-ACPs. The protein is 3-hydroxyacyl-[acyl-carrier-protein] dehydratase FabZ of Aliarcobacter butzleri (strain RM4018) (Arcobacter butzleri).